Reading from the N-terminus, the 415-residue chain is Gamma-glutamyl phosphate reductase (415 aa).

The protein belongs to the gamma-glutamyl phosphate reductase family.

It localises to the cytoplasm. It catalyses the reaction L-glutamate 5-semialdehyde + phosphate + NADP(+) = L-glutamyl 5-phosphate + NADPH + H(+). Its pathway is amino-acid biosynthesis; L-proline biosynthesis; L-glutamate 5-semialdehyde from L-glutamate: step 2/2. In terms of biological role, catalyzes the NADPH-dependent reduction of L-glutamate 5-phosphate into L-glutamate 5-semialdehyde and phosphate. The product spontaneously undergoes cyclization to form 1-pyrroline-5-carboxylate. The chain is Gamma-glutamyl phosphate reductase from Listeria monocytogenes serotype 4a (strain HCC23).